The chain runs to 604 residues: MLARALLLCVALALGHAANPCCSNPCQNRGVCMSVGFDQYQCDCTRTGFYGENCSTPEFLTRIKLFLKPTPNTVHYILTHFKGVWNIVNSFPFLRNAVMKYVLVSRSHLIESPPTYNAQYGYKSWESFSNLSYYTRALPPVADGCPTPMGVKGKKELPDSKEIVEKFLLRRKFIPDPQGTNMMFAFFAQHFTHQFFKTDPKRGPAFTKGLGHGVDLSHIYGETLDRQHKLRLFKDGKMKYQIINGEVYPPTVKDTQVEMIYPPHIPEHLRFAVGQEVFGLVPGLMMYATIWLREHNRVCDVLKQEHPEWDDERLFQTSRLILIGETIKIVIEDYVQHLSGYHFKLKFDPELLFNQQFQYQNRIAAEFNTLYHWHPLLPDTFQIDDQEYNFQQFLYNNSILLEHGLTQFVESFSRQIAGRVAGGRNVPAAAQKIAKASIDQSREMKYQSLNEYRKRFRLTPYKSFEELTGEKEMAAELEALYGDIDAMELYPALLVEKPRPDAIFGETMVELGAPFSLKGLLGNPICSPDYWKPSTFGGEVGFKIINTASIQSLICNNVKGCPFTAFSVQDPQLSKAVTINASASHSGLDDVNPTVLLKERSTEL.

A signal peptide spans 1-17; the sequence is MLARALLLCVALALGHA. Positions 18-55 constitute an EGF-like domain; that stretch reads ANPCCSNPCQNRGVCMSVGFDQYQCDCTRTGFYGENCS. Intrachain disulfides connect C21–C32, C22–C145, C26–C42, and C44–C54. Residue N53 is glycosylated (N-linked (GlcNAc...) asparagine). Substrate is bound at residue R106. The N-linked (GlcNAc...) asparagine glycan is linked to N130. Catalysis depends on H193, which acts as the Proton acceptor. Residue Y341 participates in substrate binding. Y371 acts as the For cyclooxygenase activity in catalysis. Residue H374 coordinates heme b. Residue N396 is glycosylated (N-linked (GlcNAc...) asparagine). At C526 the chain carries S-nitrosocysteine. C555 and C561 are disulfide-bonded. N-linked (GlcNAc...) asparagine glycosylation occurs at N580.

Belongs to the prostaglandin G/H synthase family. Homodimer. The cofactor is heme b. Post-translationally, S-nitrosylation by NOS2 (iNOS) activates enzyme activity. S-nitrosylation may take place on different Cys residues in addition to Cys-526.

The protein localises to the microsome membrane. The protein resides in the endoplasmic reticulum membrane. It localises to the nucleus inner membrane. Its subcellular location is the nucleus outer membrane. It carries out the reaction (5Z,8Z,11Z,14Z)-eicosatetraenoate + AH2 + 2 O2 = prostaglandin H2 + A + H2O. The enzyme catalyses (5Z,8Z,11Z,14Z)-eicosatetraenoate + 2 O2 = prostaglandin G2. The catalysed reaction is prostaglandin G2 + AH2 = prostaglandin H2 + A + H2O. It catalyses the reaction (5Z,8Z,11Z,14Z,17Z)-eicosapentaenoate + 2 O2 = prostaglandin G3. It carries out the reaction prostaglandin G3 + AH2 = prostaglandin H3 + A + H2O. The enzyme catalyses (8Z,11Z,14Z)-eicosatrienoate + 2 O2 = prostaglandin G1. The catalysed reaction is prostaglandin G1 + AH2 = prostaglandin H1 + A + H2O. It catalyses the reaction 2-(5Z,8Z,11Z,14Z)-eicosatetraenoyl-sn-glycero-3-phosphoethanolamine + 2 O2 = 2-(prostaglandin G2)-sn-glycero-3-phosphoethanolamine. It carries out the reaction 2-(prostaglandin G2)-sn-glycero-3-phosphoethanolamine + AH2 = 2-(prostaglandin H2)-sn-glycero-3-phosphoethanolamine + A + H2O. The enzyme catalyses 2-(5Z,8Z,11Z,14Z)-eicosatetraenoyl-sn-glycero-3-phosphocholine + 2 O2 = 2-(prostaglandin G2)-sn-glycero-3-phosphocholine. The catalysed reaction is 2-(prostaglandin G2)-sn-glycero-3-phosphocholine + AH2 = 2-(prostaglandin H2)-sn-glycero-3-phosphocholine + A + H2O. It catalyses the reaction (15S)-hydroperoxy-(5Z,8Z,11Z,13E)-eicosatetraenoate + AH2 = (15S)-hydroxy-(5Z,8Z,11Z,13E)-eicosatetraenoate + A + H2O. It carries out the reaction 2-(5Z,8Z,11Z,14Z)-eicosatetraenoyl-sn-glycero-3-phosphocholine + AH2 + O2 = 2-[(15S)-hydroxy-(5Z,8Z,11Z,13E)-eicosatetraenoyl]-sn-glycero-3-phosphocholine + A + H2O. The enzyme catalyses 2-(5Z,8Z,11Z,14Z)-eicosatetraenoyl-sn-glycero-3-phosphocholine + AH2 + O2 = 2-[(15R)-hydroxy-(5Z,8Z,11Z,13E)-eicosatetraenoyl]-sn-glycero-3-phosphocholine + A + H2O. The catalysed reaction is 2-(5Z,8Z,11Z,14Z)-eicosatetraenoyl-sn-glycero-3-phosphocholine + AH2 + O2 = 2-[(11R)-hydroxy-(5Z,8Z,12E,14Z)-eicosatetraenoyl]-sn-glycero-3-phosphocholine + A + H2O. It catalyses the reaction (9Z,12Z)-octadecadienoate + AH2 + O2 = 9-hydroxy-(10E,12Z)-octadecadienoate + A + H2O. It carries out the reaction (9Z,12Z)-octadecadienoate + AH2 + O2 = 13-hydroxy-(9Z,11E)-octadecadienoate + A + H2O. The enzyme catalyses (5Z,8Z,11Z,14Z)-eicosatetraenoate + AH2 + O2 = (15R)-hydroxy-(5Z,8Z,11Z,13E)-eicosatetraenoate + A + H2O. The catalysed reaction is (5Z,8Z,11Z,14Z)-eicosatetraenoate + AH2 + O2 = (11R)-hydroxy-(5Z,8Z,12E,14Z)-eicosatetraenoate + A + H2O. It catalyses the reaction (5Z,8Z,11Z,14Z,17Z)-eicosapentaenoate + AH2 + O2 = (11R)-hydroxy-(5Z,8Z,12E,14Z,17Z)-eicosapentaenoate + A + H2O. It carries out the reaction (5Z,8Z,11Z,14Z,17Z)-eicosapentaenoate + AH2 + O2 = (18S)-hydroxy-(5Z,8Z,11Z,14Z,16E)-eicosapentaenoate + A + H2O. The enzyme catalyses (5Z,8Z,11Z,14Z,17Z)-eicosapentaenoate + AH2 + O2 = (18R)-hydroxy-(5Z,8Z,11Z,14Z,16E)-eicosapentaenoate + A + H2O. The catalysed reaction is (5Z,8Z,11Z,14Z,17Z)-eicosapentaenoate + AH2 + O2 = (15R)-hydroxy-(5Z,8Z,11Z,13E,17Z)-eicosapentaenoate + A + H2O. It catalyses the reaction (5Z,8Z,11Z,14Z,17Z)-eicosapentaenoate + AH2 + O2 = (15S)-hydroxy-(5Z,8Z,11Z,13E,17Z)-eicosapentaenoate + A + H2O. It carries out the reaction (7Z,10Z,13Z,16Z,19Z)-docosapentaenoate + AH2 + O2 = 13R-hydroxy-(7Z,10Z,14E,16Z,19Z)-docosapentaenoate + A + H2O. The enzyme catalyses (4Z,7Z,10Z,13Z,16Z,19Z)-docosahexaenoate + AH2 + O2 = 13-hydroxy-(4Z,7Z,10Z,14E,16Z,19Z)-docosahexaenoate + A + H2O. The catalysed reaction is (5S)-hydroxy-(6E,8Z,11Z,14Z)-eicosatetraenoate + AH2 + O2 = (5S,15R)-dihydroxy-(6E,8Z,11Z,13E)-eicosatetraenoate + A + H2O. It catalyses the reaction (4Z,7Z,10Z,13Z,16Z,19Z)-docosahexaenoate + AH2 + O2 = 17R-hydroxy-(4Z,7Z,10Z,13Z,15E,19Z)-docosahexaenoate + A + H2O. It carries out the reaction (5S)-hydroxy-(6E,8Z,11Z,14Z)-eicosatetraenoate + AH2 + O2 = (5S,15S)-dihydroxy-(6E,8Z,11Z,13E)-eicosatetraenoate + A + H2O. The enzyme catalyses (5S)-hydroxy-(6E,8Z,11Z,14Z)-eicosatetraenoate + AH2 + O2 = (5S,11R)-dihydroxy-(6E,8Z,12E,14Z)-eicosatetraenoate + A + H2O. The catalysed reaction is 2-(5Z,8Z,11Z,14Z-eicosatetraenoyl)-glycerol + 2 O2 = 2-glyceryl-prostaglandin G2. It catalyses the reaction 2-glyceryl-prostaglandin G2 + AH2 = 2-glyceryl-prostaglandin H2 + A + H2O. It carries out the reaction (5Z,8Z,11Z,14Z)-eicosatetraenoate + O2 = (15R)-hydroperoxy-(5Z,8Z,11Z,13E)-eicosatetraenoate. The enzyme catalyses (5Z,8Z,11Z,14Z)-eicosatetraenoate + O2 = 11R-hydroperoxy-(5Z,8Z,12E,14Z)-eicosatetraenoate. The catalysed reaction is (9Z,12Z)-octadecadienoate + AH2 + O2 = (9R)-hydroxy-(10E,12Z)-octadecadienoate + A + H2O. It catalyses the reaction (9Z,12Z)-octadecadienoate + AH2 + O2 = (9S)-hydroxy-(10E,12Z)-octadecadienoate + A + H2O. It carries out the reaction (9Z,12Z)-octadecadienoate + AH2 + O2 = (13S)-hydroxy-(9Z,11E)-octadecadienoate + A + H2O. The enzyme catalyses (9Z,12Z)-octadecadienoate + AH2 + O2 = (13R)-hydroxy-(9Z,11E)-octadecadienoate + A + H2O. The protein operates within lipid metabolism; prostaglandin biosynthesis. Its function is as follows. Dual cyclooxygenase and peroxidase in the biosynthesis pathway of prostanoids, a class of C20 oxylipins mainly derived from arachidonate ((5Z,8Z,11Z,14Z)-eicosatetraenoate, AA, C20:4(n-6)), with a particular role in the inflammatory response. The cyclooxygenase activity oxygenates AA to the hydroperoxy endoperoxide prostaglandin G2 (PGG2), and the peroxidase activity reduces PGG2 to the hydroxy endoperoxide prostaglandin H2 (PGH2), the precursor of all 2-series prostaglandins and thromboxanes. This complex transformation is initiated by abstraction of hydrogen at carbon 13 (with S-stereochemistry), followed by insertion of molecular O2 to form the endoperoxide bridge between carbon 9 and 11 that defines prostaglandins. The insertion of a second molecule of O2 (bis-oxygenase activity) yields a hydroperoxy group in PGG2 that is then reduced to PGH2 by two electrons. Similarly catalyzes successive cyclooxygenation and peroxidation of dihomo-gamma-linoleate (DGLA, C20:3(n-6)) and eicosapentaenoate (EPA, C20:5(n-3)) to corresponding PGH1 and PGH3, the precursors of 1- and 3-series prostaglandins. In an alternative pathway of prostanoid biosynthesis, converts 2-arachidonoyl lysophopholipids to prostanoid lysophopholipids, which are then hydrolyzed by intracellular phospholipases to release free prostanoids. Metabolizes 2-arachidonoyl glycerol yielding the glyceryl ester of PGH2, a process that can contribute to pain response. Generates lipid mediators from n-3 and n-6 polyunsaturated fatty acids (PUFAs) via a lipoxygenase-type mechanism. Oxygenates PUFAs to hydroperoxy compounds and then reduces them to corresponding alcohols. Plays a role in the generation of resolution phase interaction products (resolvins) during both sterile and infectious inflammation. Metabolizes docosahexaenoate (DHA, C22:6(n-3)) to 17R-HDHA, a precursor of the D-series resolvins (RvDs). As a component of the biosynthetic pathway of E-series resolvins (RvEs), converts eicosapentaenoate (EPA, C20:5(n-3)) primarily to 18S-HEPE that is further metabolized by ALOX5 and LTA4H to generate 18S-RvE1 and 18S-RvE2. In vascular endothelial cells, converts docosapentaenoate (DPA, C22:5(n-3)) to 13R-HDPA, a precursor for 13-series resolvins (RvTs) shown to activate macrophage phagocytosis during bacterial infection. In activated leukocytes, contributes to oxygenation of hydroxyeicosatetraenoates (HETE) to diHETES (5,15-diHETE and 5,11-diHETE). Can also use linoleate (LA, (9Z,12Z)-octadecadienoate, C18:2(n-6)) as substrate and produce hydroxyoctadecadienoates (HODEs) in a regio- and stereospecific manner, being (9R)-HODE ((9R)-hydroxy-(10E,12Z)-octadecadienoate) and (13S)-HODE ((13S)-hydroxy-(9Z,11E)-octadecadienoate) its major products. During neuroinflammation, plays a role in neuronal secretion of specialized preresolving mediators (SPMs) 15R-lipoxin A4 that regulates phagocytic microglia. This chain is Prostaglandin G/H synthase 2 (PTGS2), found in Equus caballus (Horse).